Consider the following 299-residue polypeptide: MITFLYIFFSILIMVLFVLGNFANGFIALVNFIDWVKRKKISSADQILTALAVSRIGLLWALLLNWYLTVLNPAFYSVELRITSYNAWVVTNHFSMWLAANLSIFYLLKIANFSNLLFLHLKRRVRSVILVILLGTLIFLVCHLLVANMDESMWAEEYEGNMTGKMKLRNTVHLSYLTVTTLWSFIPFTLSLISFLMLICSLCKHLKKMQLHGEGSQDLSTKVHIKALQTLISFLLLCAIFFLFLIVSVWSPRRLRNDPVVMVSKAVGNIYLAFDSFILIWRTKKLKHTFLLILCQIRC.

Position 1 (Met1) is a topological domain, extracellular. The helical transmembrane segment at 2–22 (ITFLYIFFSILIMVLFVLGNF) threads the bilayer. At 23–55 (ANGFIALVNFIDWVKRKKISSADQILTALAVSR) the chain is on the cytoplasmic side. The helical transmembrane segment at 56–76 (IGLLWALLLNWYLTVLNPAFY) threads the bilayer. Residues 77–87 (SVELRITSYNA) lie on the Extracellular side of the membrane. A helical transmembrane segment spans residues 88-108 (WVVTNHFSMWLAANLSIFYLL). Residues 109 to 126 (KIANFSNLLFLHLKRRVR) are Cytoplasmic-facing. The helical transmembrane segment at 127–147 (SVILVILLGTLIFLVCHLLVA) threads the bilayer. The Extracellular segment spans residues 148-181 (NMDESMWAEEYEGNMTGKMKLRNTVHLSYLTVTT). The N-linked (GlcNAc...) asparagine glycan is linked to Asn161. The chain crosses the membrane as a helical span at residues 182–202 (LWSFIPFTLSLISFLMLICSL). The Cytoplasmic segment spans residues 203–229 (CKHLKKMQLHGEGSQDLSTKVHIKALQ). Residues 230 to 250 (TLISFLLLCAIFFLFLIVSVW) traverse the membrane as a helical segment. At 251 to 259 (SPRRLRNDP) the chain is on the extracellular side. A helical membrane pass occupies residues 260–280 (VVMVSKAVGNIYLAFDSFILI). Over 281 to 299 (WRTKKLKHTFLLILCQIRC) the chain is Cytoplasmic.

This sequence belongs to the G-protein coupled receptor T2R family. As to expression, expressed in subsets of taste receptor cells of the tongue and exclusively in gustducin-positive cells.

The protein resides in the membrane. Its function is as follows. Receptor that may play a role in the perception of bitterness and is gustducin-linked. May play a role in sensing the chemical composition of the gastrointestinal content. The activity of this receptor may stimulate alpha gustducin, mediate PLC-beta-2 activation and lead to the gating of TRPM5. The protein is Taste receptor type 2 member 50 (TAS2R50) of Homo sapiens (Human).